The chain runs to 140 residues: Large-conductance mechanosensitive channel 3 (140 aa).

3 helical membrane passes run 8–28, 30–50, and 81–101; these read FISK…AAFG, IVTS…FGGL, and GSFI…FLMV.

Belongs to the MscL family. In terms of assembly, homopentamer.

The protein resides in the cell inner membrane. Its function is as follows. Channel that opens in response to stretch forces in the membrane lipid bilayer. May participate in the regulation of osmotic pressure changes within the cell. This chain is Large-conductance mechanosensitive channel 3, found in Mesorhizobium japonicum (strain LMG 29417 / CECT 9101 / MAFF 303099) (Mesorhizobium loti (strain MAFF 303099)).